The primary structure comprises 374 residues: O-methyltransferase acrG (374 aa).

5 residues coordinate S-adenosyl-L-homocysteine: Tyr-19, Asn-70, Asp-96, Ser-128, and Phe-129. Phe-245 contributes to the Mg(2+) binding site.

This sequence belongs to the methyltransferase superfamily. Type-7 methyltransferase family.

Its pathway is secondary metabolite biosynthesis. O-methyltransferase; part of the cluster that mediates the biosynthesis of acurin A, a highly reduced polyketide coupled to a serine via a peptide bond. The activities of the highly reducing polyketide synthase acrA and the nonribosomal peptide synthetase acrB are collectively responsible for the synthesis of the acurin A core structure with a heptaketide backbone produced by acrA covalently fused to a L-serine by acrB. After the formation of the PK-NRP hybrid product, it is detached from acrB by reductive release to set up the formation of the lactam ring by aldol condensation. The hydrolyase acrC then catalyzes water loss to generate a double bond in the ring. This double bond is probably reduced, which is followed by three oxidations at C-22 to generate the carboxylic acid moiety, involving probably the FAD-binding monooxygenase acrE and the cytochrome P450 monooxygenases acrD and acrF. Finally, a last methylation step performed by the O-methyltransferase acrG leads to the production of acurin A. The chain is O-methyltransferase acrG from Aspergillus aculeatus (strain ATCC 16872 / CBS 172.66 / WB 5094).